Here is a 601-residue protein sequence, read N- to C-terminus: MEGQSLLMAGLLYLCAAVIAVPLAARLGIGAVLGYLLAGIAIGPWGLGFISDVQEILHFSELGVVFLMFIIGLELKPSKLWELRRSIFGVGAAQVLLSAAVLGGLLWLTDFSWQAAIIGGIGLAMSSTAMALQLMRDKAMNRNESGQLGFSVLLFQDLAVIPALALVPLLAGSDSGHTDWMKLGMKVLAFAGMLVGGRYLLRPIFRFIAASGVREVFTAAALLLVLGSALFMEALGLSMALGTFIAGILLAESEYRHELEIAIDPFKGLLLGLFFISVGMALNLGVLYTHILEILAGVVMLVTVKTAVLYLLARIYGLRSSERLQFSGVLSQGGEFAFVLFSAASSTSLFSGDQMPLLLVTVTLSMMTTPLLMQGVDKILKHRFNEVDDSQEKPFVEDDKPQVIVVGFGRFGQVVARLLMANEKRITVLERDISAVSLMRSYGYKVYYGDATQLELLRAAGAETAQSLVIACNGPEDAMAIVHLCQQHFPHLQILARARGRVEAHELLQAGVTQFSRETFSSALELGRKTLMSLGMHPHQAFRAQQHFRRLDMRMLRALMPNHGDSQQISRVKEARRELEDIFQAELRHEKRQFDGWDEAD.

The next 13 helical transmembrane spans lie at S5–A25, I29–F49, E55–L75, I87–W107, A115–M135, V152–G172, W180–R202, F207–G227, L230–L250, G268–Y288, I291–L311, L324–A344, and P356–V376. Residues K400 to T519 enclose the RCK N-terminal domain.

It belongs to the monovalent cation:proton antiporter 2 (CPA2) transporter (TC 2.A.37) family. KefB subfamily. Interacts with the regulatory subunit KefG.

Its subcellular location is the cell inner membrane. Pore-forming subunit of a potassium efflux system that confers protection against electrophiles. Catalyzes K(+)/H(+) antiport. This is Glutathione-regulated potassium-efflux system protein KefB from Erwinia tasmaniensis (strain DSM 17950 / CFBP 7177 / CIP 109463 / NCPPB 4357 / Et1/99).